Consider the following 421-residue polypeptide: 5-methylthioadenosine/S-adenosylhomocysteine deaminase (421 aa).

Residues H60 and H62 each contribute to the Zn(2+) site. Substrate-binding residues include E89 and H181. Residue H208 participates in Zn(2+) binding. Substrate-binding residues include E211 and D296. Position 296 (D296) interacts with Zn(2+).

It belongs to the metallo-dependent hydrolases superfamily. MTA/SAH deaminase family. Zn(2+) serves as cofactor.

It carries out the reaction S-adenosyl-L-homocysteine + H2O + H(+) = S-inosyl-L-homocysteine + NH4(+). The catalysed reaction is S-methyl-5'-thioadenosine + H2O + H(+) = S-methyl-5'-thioinosine + NH4(+). Its function is as follows. Catalyzes the deamination of 5-methylthioadenosine and S-adenosyl-L-homocysteine into 5-methylthioinosine and S-inosyl-L-homocysteine, respectively. Is also able to deaminate adenosine. This is 5-methylthioadenosine/S-adenosylhomocysteine deaminase from Pyrococcus horikoshii (strain ATCC 700860 / DSM 12428 / JCM 9974 / NBRC 100139 / OT-3).